The following is a 448-amino-acid chain: N-succinylarginine dihydrolase (448 aa).

Substrate contacts are provided by residues 19–28 (GGLSYGNVAS), Asn110, and 137–138 (HR). Glu174 is an active-site residue. Arg214 provides a ligand contact to substrate. His250 is an active-site residue. Positions 252 and 365 each coordinate substrate. Cys371 functions as the Nucleophile in the catalytic mechanism.

The protein belongs to the succinylarginine dihydrolase family. As to quaternary structure, homodimer.

It catalyses the reaction N(2)-succinyl-L-arginine + 2 H2O + 2 H(+) = N(2)-succinyl-L-ornithine + 2 NH4(+) + CO2. It participates in amino-acid degradation; L-arginine degradation via AST pathway; L-glutamate and succinate from L-arginine: step 2/5. Catalyzes the hydrolysis of N(2)-succinylarginine into N(2)-succinylornithine, ammonia and CO(2). The protein is N-succinylarginine dihydrolase of Pseudomonas aeruginosa (strain LESB58).